The following is a 452-amino-acid chain: Gastrin/cholecystokinin type B receptor (452 aa).

Topologically, residues 1–57 (MELLKLNRSLPGPGPGAALCRPEGPLLNGSGAGNLSCEPPRIRGAGTRELELAVRIT) are extracellular. Asn-7, Asn-28, and Asn-34 each carry an N-linked (GlcNAc...) asparagine glycan. Residues 58–78 (LYAAIFLMSVAGNVLIIVVLG) form a helical membrane-spanning segment. The Cytoplasmic portion of the chain corresponds to 79 to 99 (LSRRLRTVTNAFLLSLAVSDL). The chain crosses the membrane as a helical span at residues 100–120 (LLAVACMPFTLLPNLMGTFIF). At 121–127 (GTVVCKA) the chain is on the extracellular side. Cys-125 and Cys-203 form a disulfide bridge. Residues 128 to 148 (VSYFMGVSVSVSTLSLVAIAL) form a helical membrane-spanning segment. Over 149–171 (ERYSAICRPLQARVWQTRSHAAR) the chain is Cytoplasmic. Residues 172–192 (VIVATWMLSGLLMVPYPVYTA) traverse the membrane as a helical segment. Topologically, residues 193 to 218 (VQPAGPRVLQCMHRWPSARIRQTWSV) are extracellular. A helical membrane pass occupies residues 219 to 239 (LLLLLLFFVPGVVMAVAYGLI). The Cytoplasmic segment spans residues 240-339 (SRELYLGLRF…LLAKKRVVRM (100 aa)). Residues 256 to 285 (ESQSQVGSQGGLPGGAGQGPAHPNGHCRSE) are disordered. Positions 263–273 (SQGGLPGGAGQ) are enriched in gly residues. A helical membrane pass occupies residues 340–360 (LLVIVVLFFLCWLPVYSANTW). Residues 361-376 (RAFDGPGAHRALSGAP) are Extracellular-facing. A helical membrane pass occupies residues 377 to 397 (ISFIHLLSYASACVNPLVYCF). Residues 398-452 (MHRRFRQACLDTCARCCPRPPRARPRPLPDEDPPTPSIASLSRLSYTTISTLGPG) lie on the Cytoplasmic side of the membrane. Cys-413 carries the S-palmitoyl cysteine lipid modification.

It belongs to the G-protein coupled receptor 1 family.

It localises to the cell membrane. Receptor for gastrin and cholecystokinin. The CCK-B receptors occur throughout the central nervous system where they modulate anxiety, analgesia, arousal, and neuroleptic activity. This receptor mediates its action by association with G proteins that activate a phosphatidylinositol-calcium second messenger system. The protein is Gastrin/cholecystokinin type B receptor of Sus scrofa (Pig).